We begin with the raw amino-acid sequence, 434 residues long: MIRKVIFFVAGVFLSASLIVMAQSITTNNEQNTYKQLARFGDIFERVRTQYVTIPDDQKLIENAINGMLLSLDPHSSYMDAEKAKDMRDSTKGEFGGLGIEVTMENNLIKVVSPIDDTPAAKAGVLAGDFISKIDGKQISGQTLNEAVDQMRGPAGTPITLTINRFGVDKPLDIKIVRDIIKVKAVKYRVEGDIGYLRLIQFTEKTFSDLQAAIKDIQSKIPTDKLKGYVLDLRLNPGGLLDQAISVTDAFLNKGEIVSTRGRKQNDVMRFDAKLGDLTDEKPIIVLINGGSASASEIVAGALQDHRRATIIGTQSFGKGSVQTIIPLGENGALRLTTALYYTPSGTSIQGIGITPDIVVEQPLPEKYKGYDVTLGESELRGHIKGKQESDKGSGSAAFVPRDPKDDVQLNEAYKLLRGEITHAAFPPDPNKVF.

The signal sequence occupies residues Met-1–Gln-23. The region spanning Asp-86–Phe-166 is the PDZ domain. Residues Ser-294, Asp-305, and Lys-319 each act as charge relay system in the active site. The segment covering His-383–Lys-392 has biased composition (basic and acidic residues). A disordered region spans residues His-383–Asp-406.

Belongs to the peptidase S41A family. Post-translationally, may undergo autocatalytic processing at the C-terminus (398-434 or 425-434 missing).

The protein localises to the secreted. It catalyses the reaction The enzyme shows specific recognition of a C-terminal tripeptide, Xaa-Yaa-Zaa, in which Xaa is preferably Ala or Leu, Yaa is preferably Ala or Tyr, and Zaa is preferably Ala, but then cleaves at a variable distance from the C-terminus. A typical cleavage is -Ala-Ala-|-Arg-Ala-Ala-Lys-Glu-Asn-Tyr-Ala-Leu-Ala-Ala.. Functionally, involved in protection of the bacterium from thermal and osmotic stresses. The polypeptide is Carboxy-terminal-processing protease (ctpA) (Bartonella bacilliformis (strain ATCC 35685 / KC583 / Herrer 020/F12,63)).